Consider the following 314-residue polypeptide: Deoxymugineic acid synthase 1 (314 aa).

The tract at residues 1–21 (MGAGDRTVAGMPRIGMGTAVQ) is disordered. D44 serves as a coordination point for NADP(+). Catalysis depends on Y49, which acts as the Proton donor. H112 serves as a coordination point for substrate. NADP(+) contacts are provided by residues 158-159 (AN), Q180, 258-266 (FDEARMREN), and 273-281 (ELTEEERRR).

The protein belongs to the aldo/keto reductase family.

It carries out the reaction 2'-deoxymugineate + NAD(+) = 3''-deamino-3''-oxonicotianamine + NADH + H(+). It catalyses the reaction 2'-deoxymugineate + NADP(+) = 3''-deamino-3''-oxonicotianamine + NADPH + H(+). It functions in the pathway siderophore biosynthesis. In terms of biological role, catalyzes the reduction of a 3''-keto intermediate during the biosynthesis of 2'-deoxymugineic acid (DMA) from L-Met. Involved in the formation of phytosiderophores (MAs) belonging to the mugineic acid family and required to acquire iron. The protein is Deoxymugineic acid synthase 1 of Hordeum vulgare (Barley).